Consider the following 42-residue polypeptide: Small protein MntS (42 aa).

It is found in the cytoplasm. Its function is as follows. Required for repression of mntH by MntR. May function as a chaperone that makes manganese more available by delivering it to the necessary cellular locations when manganese is limiting. The sequence is that of Small protein MntS (mntS) from Escherichia coli (strain K12).